A 138-amino-acid chain; its full sequence is Large ribosomal subunit protein uL16 (138 aa).

Over residues 1–19 (MLIPRRVKHRKQHHPKRSG) the composition is skewed to basic residues. Residues 1–24 (MLIPRRVKHRKQHHPKRSGAAKGG) are disordered.

Belongs to the universal ribosomal protein uL16 family. As to quaternary structure, part of the 50S ribosomal subunit.

Binds 23S rRNA and is also seen to make contacts with the A and possibly P site tRNAs. The polypeptide is Large ribosomal subunit protein uL16 (Micrococcus luteus (strain ATCC 4698 / DSM 20030 / JCM 1464 / CCM 169 / CCUG 5858 / IAM 1056 / NBRC 3333 / NCIMB 9278 / NCTC 2665 / VKM Ac-2230) (Micrococcus lysodeikticus)).